Here is a 113-residue protein sequence, read N- to C-terminus: Dolichyl-diphosphooligosaccharide--protein glycosyltransferase subunit DAD1 (113 aa).

Residues 1 to 30 (MGSSAFEVLTFFLKDYKANTPQKLKIIDAY) are Cytoplasmic-facing. A helical transmembrane segment spans residues 31–51 (LLYILLTGINQFLYCCLVGTF). Pro-52 is a topological domain (lumenal). A helical membrane pass occupies residues 53–73 (FNSFLSGFISCVASFVLGVCL). Over 74 to 92 (RLQVNPQNSSNFCGIPPER) the chain is Cytoplasmic. A helical transmembrane segment spans residues 93-113 (AFADFIFAHVVLHLVVMNFIG).

This sequence belongs to the DAD/OST2 family. As to quaternary structure, component of the oligosaccharyltransferase (OST) complex. As to expression, widely expressed. Greatest expression seen in the epidermis, intermediate expression in the fat body and midgut and mild expression observed in the silk gland.

It is found in the endoplasmic reticulum membrane. Its pathway is protein modification; protein glycosylation. Its function is as follows. Subunit of the oligosaccharyl transferase (OST) complex that catalyzes the initial transfer of a defined glycan (Glc(3)Man(9)GlcNAc(2) in eukaryotes) from the lipid carrier dolichol-pyrophosphate to an asparagine residue within an Asn-X-Ser/Thr consensus motif in nascent polypeptide chains, the first step in protein N-glycosylation. N-glycosylation occurs cotranslationally and the complex associates with the Sec61 complex at the channel-forming translocon complex that mediates protein translocation across the endoplasmic reticulum (ER). All subunits are required for a maximal enzyme activity. In Araneus ventricosus (Orbweaver spider), this protein is Dolichyl-diphosphooligosaccharide--protein glycosyltransferase subunit DAD1.